Reading from the N-terminus, the 389-residue chain is Phospho-N-acetylmuramoyl-pentapeptide-transferase (389 aa).

The next 10 helical transmembrane spans lie at 25–45, 73–93, 97–117, 135–155, 190–210, 222–242, 259–279, 287–307, 311–331, and 366–386; these read RAVM…PAVI, TMGG…WADL, FIWI…VDDY, FWQS…VSEA, ISYP…IVGA, GLVI…AYVM, AGEL…FLWF, FMGD…AVIV, IVLF…MLQV, and QVVV…LSTL.

This sequence belongs to the glycosyltransferase 4 family. MraY subfamily. It depends on Mg(2+) as a cofactor.

It is found in the cell inner membrane. It carries out the reaction UDP-N-acetyl-alpha-D-muramoyl-L-alanyl-gamma-D-glutamyl-meso-2,6-diaminopimeloyl-D-alanyl-D-alanine + di-trans,octa-cis-undecaprenyl phosphate = di-trans,octa-cis-undecaprenyl diphospho-N-acetyl-alpha-D-muramoyl-L-alanyl-D-glutamyl-meso-2,6-diaminopimeloyl-D-alanyl-D-alanine + UMP. It functions in the pathway cell wall biogenesis; peptidoglycan biosynthesis. Catalyzes the initial step of the lipid cycle reactions in the biosynthesis of the cell wall peptidoglycan: transfers peptidoglycan precursor phospho-MurNAc-pentapeptide from UDP-MurNAc-pentapeptide onto the lipid carrier undecaprenyl phosphate, yielding undecaprenyl-pyrophosphoryl-MurNAc-pentapeptide, known as lipid I. This chain is Phospho-N-acetylmuramoyl-pentapeptide-transferase, found in Paraburkholderia xenovorans (strain LB400).